Consider the following 343-residue polypeptide: Pseudaminic acid synthase (343 aa).

The AFP-like domain maps to 287–343 (SLYASKDIKKGEIFSEENVKSVRPSFGLHPKFYQELLGKKASKDIEFGDALKESDFR).

Belongs to the pseudaminic acid synthase family. It depends on a divalent metal cation as a cofactor.

It carries out the reaction 2,4-diacetamido-2,4,6-trideoxy-beta-L-altrose + phosphoenolpyruvate + H2O = pseudaminate + phosphate. Functionally, catalyzes the fifth step in the biosynthesis of pseudaminic acid, a sialic-acid-like sugar that is used to modify flagellin. Catalyzes the condensation of phosphoenolpyruvate with 2,4-diacetamido-2,4,6-trideoxy-beta-l-altropyranose, forming pseudaminic acid. This Campylobacter jejuni subsp. jejuni serotype O:23/36 (strain 81-176) protein is Pseudaminic acid synthase (pseI).